Reading from the N-terminus, the 170-residue chain is Zinc finger protein 576 (170 aa).

A disordered region spans residues 1-29 (MEDPNPEENMKQQDSPKERSPQSPGGNIC). Positions 8–20 (ENMKQQDSPKERS) are enriched in basic and acidic residues. 4 C2H2-type zinc fingers span residues 34–57 (PKCT…KREH), 71–93 (FICF…QRSH), 112–134 (FPCP…RQMH), and 143–165 (FACT…YIRH).

The protein belongs to the krueppel C2H2-type zinc-finger protein family.

It is found in the nucleus. Functionally, may be involved in transcriptional regulation. The polypeptide is Zinc finger protein 576 (ZNF576) (Homo sapiens (Human)).